The primary structure comprises 79 residues: Alpha-actitoxin-Ms11a-4 (79 aa).

The first 23 residues, 1-23 (MKVLVAVLVFALLMCMFVDIAES), serve as a signal peptide directing secretion. Positions 24–46 (RRRDNPEYPSGLRYDEEMGVFKR) are excised as a propeptide. 3 disulfide bridges follow: Cys47-Cys61, Cys54-Cys67, and Cys60-Cys76. A Tyrosine amide modification is found at Tyr78.

It localises to the secreted. It is found in the nematocyst. In terms of biological role, alpha-toxins act on postsynaptic membranes, they bind to the nicotinic acetylcholine receptors (nAChR) and thus inhibit them. This toxin very weakly competes with alpha-bungarotoxin for binding to orthosteric sites on muscle-type T.carlifornicus (IC(50)=14.95 uM) and human alpha-7/CHRNA7 nAChRs (IC(50)&gt;45 uM). The protein is Alpha-actitoxin-Ms11a-4 of Metridium senile (Brown sea anemone).